A 210-amino-acid chain; its full sequence is Somatotropin (210 aa).

An N-terminal signal peptide occupies residues 1–23; the sequence is MARALVLLSVVLVSLLVNQGTAS. H38 provides a ligand contact to Zn(2+). A disulfide bridge connects residues C71 and C183. E192 serves as a coordination point for Zn(2+). An intrachain disulfide couples C200 to C208.

This sequence belongs to the somatotropin/prolactin family.

The protein localises to the secreted. In terms of biological role, growth hormone plays an important role in growth control. This Ctenopharyngodon idella (Grass carp) protein is Somatotropin (gh).